The following is a 492-amino-acid chain: NADH-quinone oxidoreductase subunit N (492 aa).

14 helical membrane passes run 12 to 32 (LLPY…MIAI), 44 to 64 (ISVV…AGII), 76 to 96 (LFVI…CALA), 115 to 135 (LYLL…AQHL), 138 to 158 (FFMS…YTYM), 169 to 189 (YLVL…FIYA), 212 to 232 (LILG…AAPF), 244 to 264 (PAPI…ALAV), 272 to 292 (LLAL…SILL), 306 to 326 (LLGY…VSIG), 334 to 354 (SMYM…VTLM), 381 to 401 (TAVM…AGFI), 416 to 438 (WFLA…RVLL), and 463 to 483 (IMVI…NSMI).

It belongs to the complex I subunit 2 family. As to quaternary structure, NDH-1 is composed of 14 different subunits. Subunits NuoA, H, J, K, L, M, N constitute the membrane sector of the complex.

It is found in the cell inner membrane. It catalyses the reaction a quinone + NADH + 5 H(+)(in) = a quinol + NAD(+) + 4 H(+)(out). Its function is as follows. NDH-1 shuttles electrons from NADH, via FMN and iron-sulfur (Fe-S) centers, to quinones in the respiratory chain. The immediate electron acceptor for the enzyme in this species is believed to be ubiquinone. Couples the redox reaction to proton translocation (for every two electrons transferred, four hydrogen ions are translocated across the cytoplasmic membrane), and thus conserves the redox energy in a proton gradient. This is NADH-quinone oxidoreductase subunit N from Psychrobacter arcticus (strain DSM 17307 / VKM B-2377 / 273-4).